The sequence spans 341 residues: Heat-inducible transcription repressor HrcA (341 aa).

Belongs to the HrcA family.

Its function is as follows. Negative regulator of class I heat shock genes (grpE-dnaK-dnaJ and groELS operons). Prevents heat-shock induction of these operons. This Corynebacterium glutamicum (strain ATCC 13032 / DSM 20300 / JCM 1318 / BCRC 11384 / CCUG 27702 / LMG 3730 / NBRC 12168 / NCIMB 10025 / NRRL B-2784 / 534) protein is Heat-inducible transcription repressor HrcA.